The sequence spans 129 residues: Urease subunit beta (129 aa).

Belongs to the urease beta subunit family. Heterotrimer of UreA (gamma), UreB (beta) and UreC (alpha) subunits. Three heterotrimers associate to form the active enzyme.

It localises to the cytoplasm. The catalysed reaction is urea + 2 H2O + H(+) = hydrogencarbonate + 2 NH4(+). It functions in the pathway nitrogen metabolism; urea degradation; CO(2) and NH(3) from urea (urease route): step 1/1. This Photorhabdus laumondii subsp. laumondii (strain DSM 15139 / CIP 105565 / TT01) (Photorhabdus luminescens subsp. laumondii) protein is Urease subunit beta.